The sequence spans 542 residues: Chaperonin GroEL (542 aa).

Residues 29–32 (TLGP), 86–90 (DGTTT), Gly413, 476–478 (NAA), and Asp492 each bind ATP.

This sequence belongs to the chaperonin (HSP60) family. As to quaternary structure, forms a cylinder of 14 subunits composed of two heptameric rings stacked back-to-back. Interacts with the co-chaperonin GroES.

Its subcellular location is the cytoplasm. The catalysed reaction is ATP + H2O + a folded polypeptide = ADP + phosphate + an unfolded polypeptide.. Its function is as follows. Together with its co-chaperonin GroES, plays an essential role in assisting protein folding. The GroEL-GroES system forms a nano-cage that allows encapsulation of the non-native substrate proteins and provides a physical environment optimized to promote and accelerate protein folding. The polypeptide is Chaperonin GroEL (Listeria welshimeri serovar 6b (strain ATCC 35897 / DSM 20650 / CCUG 15529 / CIP 8149 / NCTC 11857 / SLCC 5334 / V8)).